Here is a 403-residue protein sequence, read N- to C-terminus: F-box/kelch-repeat protein At5g43190 (403 aa).

One can recognise an F-box domain in the interval 45 to 91 (PNIWSNLPNHLLEHILSLLPFKTLLTLRSISRHLRSLILSPSFISDH). Kelch repeat units lie at residues 91–140 (HSFS…LLSS), 192–240 (KIFT…VFYN), 291–339 (ILYM…VCYH), and 343–393 (HVYC…FRWF).

The protein is F-box/kelch-repeat protein At5g43190 of Arabidopsis thaliana (Mouse-ear cress).